A 562-amino-acid polypeptide reads, in one-letter code: Delta-1-pyrroline-5-carboxylate dehydrogenase, mitochondrial (562 aa).

A mitochondrion-targeting transit peptide spans methionine 1–tryptophan 23. Lysine 30 carries the N6-succinyllysine modification. The residue at position 43 (serine 43) is a Phosphoserine. Residue lysine 51 is modified to N6-acetyllysine. N6-acetyllysine; alternate occurs at positions 92, 98, 113, 129, and 174. N6-succinyllysine; alternate occurs at positions 92, 98, 113, 129, and 174. NAD(+)-binding positions include serine 207, lysine 232, and glycine 285 to threonine 289. Glutamate 313 functions as the Proton acceptor in the catalytic mechanism. Lysine 317 is subject to N6-acetyllysine. At lysine 346 the chain carries N6-succinyllysine. The Nucleophile role is filled by cysteine 347. Lysine 357 carries the N6-acetyllysine; alternate modification. Position 357 is an N6-succinyllysine; alternate (lysine 357). 2 positions are modified to N6-acetyllysine: lysine 364 and lysine 375. Lysine 394 carries the post-translational modification N6-succinyllysine. Glutamate 446 contacts NAD(+). Lysine 461 is subject to N6-acetyllysine. At lysine 508 the chain carries N6-acetyllysine; alternate. Residue lysine 508 is modified to N6-succinyllysine; alternate. Serine 512 serves as a coordination point for substrate. 2 positions are modified to N6-acetyllysine: lysine 530 and lysine 551.

This sequence belongs to the aldehyde dehydrogenase family. As to quaternary structure, homodimer. In terms of processing, acetylation of Lys-98, Lys-113 and Lys-401 is observed in liver mitochondria from fasted mice but not from fed mice.

The protein localises to the mitochondrion matrix. The enzyme catalyses L-glutamate 5-semialdehyde + NAD(+) + H2O = L-glutamate + NADH + 2 H(+). It functions in the pathway amino-acid degradation; L-proline degradation into L-glutamate; L-glutamate from L-proline: step 2/2. Functionally, irreversible conversion of delta-1-pyrroline-5-carboxylate (P5C), derived either from proline or ornithine, to glutamate. This is a necessary step in the pathway interconnecting the urea and tricarboxylic acid cycles. The preferred substrate is glutamic gamma-semialdehyde, other substrates include succinic, glutaric and adipic semialdehydes. This Mus musculus (Mouse) protein is Delta-1-pyrroline-5-carboxylate dehydrogenase, mitochondrial (Aldh4a1).